We begin with the raw amino-acid sequence, 157 residues long: ATP synthase subunit b (157 aa).

Residues 7–29 form a helical membrane-spanning segment; the sequence is LISQAIAFSLFILFTARFVWPYL.

It belongs to the ATPase B chain family. In terms of assembly, F-type ATPases have 2 components, F(1) - the catalytic core - and F(0) - the membrane proton channel. F(1) has five subunits: alpha(3), beta(3), gamma(1), delta(1), epsilon(1). F(0) has three main subunits: a(1), b(2) and c(10-14). The alpha and beta chains form an alternating ring which encloses part of the gamma chain. F(1) is attached to F(0) by a central stalk formed by the gamma and epsilon chains, while a peripheral stalk is formed by the delta and b chains.

The protein resides in the cell inner membrane. Functionally, f(1)F(0) ATP synthase produces ATP from ADP in the presence of a proton or sodium gradient. F-type ATPases consist of two structural domains, F(1) containing the extramembraneous catalytic core and F(0) containing the membrane proton channel, linked together by a central stalk and a peripheral stalk. During catalysis, ATP synthesis in the catalytic domain of F(1) is coupled via a rotary mechanism of the central stalk subunits to proton translocation. Component of the F(0) channel, it forms part of the peripheral stalk, linking F(1) to F(0). The sequence is that of ATP synthase subunit b from Nitrosomonas europaea (strain ATCC 19718 / CIP 103999 / KCTC 2705 / NBRC 14298).